A 491-amino-acid polypeptide reads, in one-letter code: MIATGGVITGLAALKRQDSARSQQHVNLSPSPATQEKKPIRRRPRADVVVVRGKIRLYSPSGFFLILGVLISIIGIAMAVLGYWPQKEHFIDAETTLSTNETQVIRNEGGVVVRFFEQHLHSDKMKMLGPFTMGIGIFIFICANAILHENRDKETKIIHMRDIYSTVIDIHTLRIKEQRQMNGMYTGLMGETEVKQNGSSCASRLAANTIASFSGFRSSFRMDSSVEEDELMLNEGKSSGHLMPPLLSDSSVSVFGLYPPPSKTTDDKTSGSKKCETKSIVSSSISAFTLPVIKLNNCVIDEPSIDNITEDADNLKSRSRNLSMDSLVVPLPNTSESFQPVSTVLPRNNSIGESLSSQYKSSMALGPGAGQLLSPGAARRQFGSNTSLHLLSSHSKSLDLDRGPSTLTVQAEQRKHPSWPRLDRNNSKGYMKLENKEDPMDRLLVPQVAIKKDFTNKEKLLMISRSHNNLSFEHDEFLSNNLKRGTSETRF.

Residues 1–61 (MIATGGVITG…RGKIRLYSPS (61 aa)) lie on the Cytoplasmic side of the membrane. A disordered region spans residues 16–41 (RQDSARSQQHVNLSPSPATQEKKPIR). Polar residues predominate over residues 20-34 (ARSQQHVNLSPSPAT). The helical transmembrane segment at 62-82 (GFFLILGVLISIIGIAMAVLG) threads the bilayer. Topologically, residues 83-126 (YWPQKEHFIDAETTLSTNETQVIRNEGGVVVRFFEQHLHSDKMK) are extracellular. N-linked (GlcNAc...) asparagine glycosylation occurs at asparagine 100. A helical membrane pass occupies residues 127 to 147 (MLGPFTMGIGIFIFICANAIL). The Cytoplasmic portion of the chain corresponds to 148–491 (HENRDKETKI…LKRGTSETRF (344 aa)). Position 350 is a phosphoserine (serine 350).

Belongs to the TMEM200 family. Expressed in cerebellum.

It localises to the membrane. This chain is Transmembrane protein 200A (TMEM200A), found in Homo sapiens (Human).